The primary structure comprises 315 residues: MPWGIAISILVDLILGDPKDLPHPVRAIGKLARALEKFFRNNCSSEEIAGILTSCLVYLISFIIPFLSVQFANQLHWILGELLSIMIIYTTIAIRDMIDHSKEVYDALVQTNLPLARKKVSKIVARDTENLSESEIIRACVESTAENLVDGITTPLFYAVFGGPAWAMLYRSINTLDSLFGYKNKKYLRFGSFPARIDDLANYLPARITSYILVLSSLFLGYNFKNSLYILQRDGKKHPSPNSGLTEAAVAGALEIQLGGVNLYSGVQNIKPKLGDPKKEFQIEQILQTNKLILLSSILTFIFYILIYSGAAYFL.

5 helical membrane-spanning segments follow: residues 48–70 (IAGI…LSVQ), 75–94 (LHWI…TIAI), 148–170 (LVDG…AMLY), 208–230 (ITSY…SLYI), and 292–314 (LILL…AAYF).

It belongs to the CobD/CbiB family.

The protein localises to the cell membrane. Its pathway is cofactor biosynthesis; adenosylcobalamin biosynthesis. Functionally, converts cobyric acid to cobinamide by the addition of aminopropanol on the F carboxylic group. The polypeptide is Cobalamin biosynthesis protein CobD (Leptospira interrogans serogroup Icterohaemorrhagiae serovar copenhageni (strain Fiocruz L1-130)).